Consider the following 288-residue polypeptide: Pteridine reductase 1 (288 aa).

Position 17–40 (17–40 (RLGRSIAEGLHAEGYAVCLHYHRS)) interacts with NADP(+). Serine 175 is a binding site for substrate. The active-site Proton acceptor is the tyrosine 194.

The protein belongs to the short-chain dehydrogenases/reductases (SDR) family. As to quaternary structure, homotetramer.

It catalyses the reaction (6R)-L-erythro-5,6,7,8-tetrahydrobiopterin + 2 NADP(+) = L-erythro-biopterin + 2 NADPH + 2 H(+). The protein operates within cofactor biosynthesis; tetrahydrobiopterin biosynthesis; tetrahydrobiopterin from biopterin: step 1/1. In terms of biological role, exhibits a NADPH-dependent biopterin reductase activity. Has good activity with folate and significant activity with dihydrofolate and dihydrobiopterin, but not with quinonoid dihydrobiopterin. Confers resistance to methotrexate (MTX). This is Pteridine reductase 1 (PTR1) from Leishmania major.